Consider the following 406-residue polypeptide: Argininosuccinate synthase (406 aa).

Residues Ala-13–Ser-21 and Ala-40 contribute to the ATP site. L-citrulline-binding residues include Tyr-91 and Ser-96. ATP is bound at residue Gly-121. Thr-123, Asn-127, and Asp-128 together coordinate L-aspartate. L-citrulline is bound at residue Asn-127. L-citrulline contacts are provided by Arg-131, Ser-182, Ser-191, Glu-267, and Tyr-279.

Belongs to the argininosuccinate synthase family. Type 1 subfamily. Homotetramer.

The protein resides in the cytoplasm. The enzyme catalyses L-citrulline + L-aspartate + ATP = 2-(N(omega)-L-arginino)succinate + AMP + diphosphate + H(+). It functions in the pathway amino-acid biosynthesis; L-arginine biosynthesis; L-arginine from L-ornithine and carbamoyl phosphate: step 2/3. The polypeptide is Argininosuccinate synthase (Brucella anthropi (strain ATCC 49188 / DSM 6882 / CCUG 24695 / JCM 21032 / LMG 3331 / NBRC 15819 / NCTC 12168 / Alc 37) (Ochrobactrum anthropi)).